A 541-amino-acid polypeptide reads, in one-letter code: uncharacterized protein (541 aa).

Transmembrane regions (helical) follow at residues 57–77 (LVVT…TIAI), 90–110 (LTFG…SYAL), 144–164 (VGHL…YGLI), 167–187 (AFIP…ATAT), 221–241 (MVVW…MAMF), and 257–277 (VLII…ILAW). Residues 278-329 (LTATPVRVVRAALRRVERGELRTNLVVFDGTELGELQRGFNAMVAGLRERER) enclose the HAMP domain. The 125-residue stretch at 361–485 (AVVFIDIVGS…EPVNEAARLC (125 aa)) folds into the Guanylate cyclase domain.

Belongs to the adenylyl cyclase class-3 family.

The protein localises to the cell membrane. This is an uncharacterized protein from Mycobacterium tuberculosis (strain CDC 1551 / Oshkosh).